We begin with the raw amino-acid sequence, 328 residues long: Naphthalene 1,2-dioxygenase/salicylate 5-hydroxylase systems, ferredoxin--NAD(P)(+), reductase component (328 aa).

A 2Fe-2S ferredoxin-type domain is found at 1–89; that stretch reads MELVVEPLNL…DCTIEIPESD (89 aa). Residues C35, C40, C43, and C73 each contribute to the [2Fe-2S] cluster site. An FAD-binding FR-type domain is found at 96 to 193; it reads ARIVKGTVTA…SGPLGTAYLR (98 aa).

This sequence belongs to the bacterial ring-hydroxylating dioxygenase ferredoxin reductase family. In terms of assembly, ferredoxin reductase NagAa belongs to both the salicylate 5-hydroxylase (S5H) and the naphthalene 1,2-dioxygenase (NDO) multicomponent enzyme systems. The NDO multicomponent enzyme system is composed of an electron transfer component and a dioxygenase component (iron sulfur protein (ISP)). The electron transfer component is composed of a ferredoxin reductase (NagAa) and a ferredoxin (NagAb), and the dioxygenase component is formed by a large alpha subunit (NagAc) and a small beta subunit (NagAd). The S5H multicomponent enzyme system is composed of an electron transfer component and a monooxygenase component. The electron transfer component is comprised of a ferredoxin reductase (NagAa) and a ferredoxin (NagAb), and the monooxygenase component is formed by a large subunit (NagG) and a small subunit (NagH). The cofactor is [2Fe-2S] cluster. Requires FAD as cofactor.

The enzyme catalyses 2 reduced [2Fe-2S]-[ferredoxin] + NAD(+) + H(+) = 2 oxidized [2Fe-2S]-[ferredoxin] + NADH. The catalysed reaction is 2 reduced [2Fe-2S]-[ferredoxin] + NADP(+) + H(+) = 2 oxidized [2Fe-2S]-[ferredoxin] + NADPH. It functions in the pathway aromatic compound metabolism; naphthalene degradation. In terms of biological role, component of two multicomponent enzyme systems which are involved in the catabolism of naphthalene. Plays a role as an electron transfer component for both salicylate 5-hydroxylase (S5H) and naphthalene 1,2-dioxygenase (NDO) systems, by transferring electrons from NAD(P)H to the oxygenase component via the ferredoxin NagAb. The electron transport chain from the two systems can use both NADH and NADPH as electron donors at approximately similar rates. In Ralstonia sp, this protein is Naphthalene 1,2-dioxygenase/salicylate 5-hydroxylase systems, ferredoxin--NAD(P)(+), reductase component.